A 678-amino-acid chain; its full sequence is Amino-acid acetyltransferase, mitochondrial (678 aa).

The disordered stretch occupies residues 86–111; the sequence is LKAQHPPKAQTEPTTGHSKGTVTQSL. A compositionally biased stretch (polar residues) spans 96–111; that stretch reads TEPTTGHSKGTVTQSL. One can recognise an N-acetyltransferase domain in the interval 499 to 668; the sequence is NRPRLSLDDP…YEQVCRSIQP (170 aa).

This sequence belongs to the acetyltransferase family.

The protein resides in the mitochondrion. It catalyses the reaction L-glutamate + acetyl-CoA = N-acetyl-L-glutamate + CoA + H(+). The protein operates within amino-acid biosynthesis; L-arginine biosynthesis; N(2)-acetyl-L-ornithine from L-glutamate: step 1/4. Its function is as follows. N-acetylglutamate synthase involved in arginine biosynthesis. The protein is Amino-acid acetyltransferase, mitochondrial (arg2) of Aspergillus oryzae (strain ATCC 42149 / RIB 40) (Yellow koji mold).